We begin with the raw amino-acid sequence, 335 residues long: Beta-ketoacyl-[acyl-carrier-protein] synthase III (335 aa).

Residues Cys-119 and His-261 contribute to the active site. The ACP-binding stretch occupies residues 262 to 266; it reads QANQR. The active site involves Asn-291.

Belongs to the thiolase-like superfamily. FabH family. As to quaternary structure, homodimer.

Its subcellular location is the cytoplasm. It catalyses the reaction malonyl-[ACP] + acetyl-CoA + H(+) = 3-oxobutanoyl-[ACP] + CO2 + CoA. It functions in the pathway lipid metabolism; fatty acid biosynthesis. Functionally, catalyzes the condensation reaction of fatty acid synthesis by the addition to an acyl acceptor of two carbons from malonyl-ACP. Catalyzes the first condensation reaction which initiates fatty acid synthesis and may therefore play a role in governing the total rate of fatty acid production. Possesses both acetoacetyl-ACP synthase and acetyl transacylase activities. Its substrate specificity determines the biosynthesis of branched-chain and/or straight-chain of fatty acids. The sequence is that of Beta-ketoacyl-[acyl-carrier-protein] synthase III from Prochlorococcus marinus subsp. pastoris (strain CCMP1986 / NIES-2087 / MED4).